Reading from the N-terminus, the 133-residue chain is Inhibitor of g-type lysozyme (133 aa).

The N-terminal stretch at 1–22 is a signal peptide; sequence MKIKSIRKAVLLLALLTSTSFA.

The protein localises to the periplasm. Inhibits activity of g-type lysozyme, which confers increased lysozyme tolerance to the bacterium. This Escherichia coli (strain K12) protein is Inhibitor of g-type lysozyme (pliG).